The primary structure comprises 352 residues: Photosystem II D2 protein (352 aa).

Residues 40–60 (CAYMALGGWLTGTTFVTSWYT) traverse the membrane as a helical segment. A chlorophyll a-binding site is contributed by histidine 117. Residues 124-140 (GFMLRQFEIARLVGIRP) form a helical membrane-spanning segment. Pheophytin a-binding residues include glutamine 129 and asparagine 142. Residues 152-165 (VFVSVFLMYPLGQS) form a helical membrane-spanning segment. Histidine 197 lines the chlorophyll a pocket. The chain crosses the membrane as a helical span at residues 207–227 (GALLCAIHGATVENTLFEDGD). Histidine 214 and phenylalanine 261 together coordinate a plastoquinone. Histidine 214 contacts Fe cation. Position 268 (histidine 268) interacts with Fe cation. Residues 278–294 (GLWTSSIGIIGLALNLR) form a helical membrane-spanning segment.

Belongs to the reaction center PufL/M/PsbA/D family. As to quaternary structure, PSII is composed of 1 copy each of membrane proteins PsbA, PsbB, PsbC, PsbD, PsbE, PsbF, PsbH, PsbI, PsbJ, PsbK, PsbL, PsbM, PsbT, PsbX, PsbY, PsbZ, Psb30/Ycf12, peripheral proteins PsbO, CyanoQ (PsbQ), PsbU, PsbV and a large number of cofactors. It forms dimeric complexes. The cofactor is The D1/D2 heterodimer binds P680, chlorophylls that are the primary electron donor of PSII, and subsequent electron acceptors. It shares a non-heme iron and each subunit binds pheophytin, quinone, additional chlorophylls, carotenoids and lipids. There is also a Cl(-1) ion associated with D1 and D2, which is required for oxygen evolution. The PSII complex binds additional chlorophylls, carotenoids and specific lipids..

It localises to the cellular thylakoid membrane. The enzyme catalyses 2 a plastoquinone + 4 hnu + 2 H2O = 2 a plastoquinol + O2. Functionally, photosystem II (PSII) is a light-driven water:plastoquinone oxidoreductase that uses light energy to abstract electrons from H(2)O, generating O(2) and a proton gradient subsequently used for ATP formation. It consists of a core antenna complex that captures photons, and an electron transfer chain that converts photonic excitation into a charge separation. The D1/D2 (PsbA/PsbD) reaction center heterodimer binds P680, the primary electron donor of PSII as well as several subsequent electron acceptors. D2 is needed for assembly of a stable PSII complex. This is Photosystem II D2 protein from Synechococcus sp. (strain RCC307).